The sequence spans 404 residues: Alkane 1-monooxygenase 1 (404 aa).

Transmembrane regions (helical) follow at residues 25 to 45 (HLWI…YLVS), 47 to 67 (TGWS…VPLI), 94 to 114 (VLTY…AWWV), and 119 to 139 (IGVF…GLAL). Fe cation is bound by residues H143 and H147. The helical transmembrane segment at 151–171 (TFDRWMAKLVLAVVGYGHFFI) threads the bilayer. Fe cation contacts are provided by H173, H177, and H178. Residues 241–261 (VVLYAALLAFFGPLMLIFLPI) form a helical membrane-spanning segment. Fe cation contacts are provided by H317, H320, and H321.

The protein belongs to the fatty acid desaturase type 1 family. AlkB subfamily. Fe(3+) serves as cofactor.

The protein resides in the cell inner membrane. The catalysed reaction is octane + 2 reduced [rubredoxin] + O2 + 2 H(+) = 2 oxidized [rubredoxin] + octan-1-ol + H2O. It functions in the pathway hydrocarbon metabolism; alkane degradation. Functionally, catalyzes the hydroxylation of n-alkanes and fatty acids in the presence of a NADH-rubredoxin reductase and rubredoxin. It preferably hydroxylases C5-C12 hydrocarbons. The polypeptide is Alkane 1-monooxygenase 1 (alkB1) (Alcanivorax borkumensis (strain ATCC 700651 / DSM 11573 / NCIMB 13689 / SK2)).